Reading from the N-terminus, the 273-residue chain is Cbp/p300-interacting transactivator 2 (273 aa).

Residues 137–204 (DLHPAAGHQM…GSGGSGSSNM (68 aa)) form a disordered region. A compositionally biased stretch (gly residues) spans 165–200 (STPGGSGGSSTPGGSGGSAGGGAGSSNSGGGSGGSG).

It belongs to the CITED family. In terms of assembly, interacts (via C-terminus) with SMAD2. Interacts (via C-terminus) with SMAD3 (via MH2 domain). Interacts with LHX2 (via LIM domains). Interacts with WT1. Interacts (via C-terminus) with EP300 (via CH1 domain); the interaction is stimulated in response to hypoxia. Interacts with PPARA. Interacts (via C-terminus) with TFAP2A, TFAP2B and TFAP2C.

The protein localises to the nucleus. In terms of biological role, transcriptional coactivator of the p300/CBP-mediated transcription complex. Acts as a bridge, linking TFAP2 transcription factors and the p300/CBP transcriptional coactivator complex in order to stimulate TFAP2-mediated transcriptional activation. Positively regulates TGF-beta signaling through its association with the SMAD/p300/CBP-mediated transcriptional coactivator complex. Stimulates the peroxisome proliferator-activated receptors PPARA transcriptional activity. Enhances estrogen-dependent transactivation mediated by estrogen receptors. Also acts as a transcriptional corepressor; interferes with the binding of the transcription factors HIF1A or STAT2 and the p300/CBP transcriptional coactivator complex. Participates in sex determination and early gonad development by stimulating transcription activation of SRY. Plays a role in controlling left-right patterning during embryogenesis; potentiates transcriptional activation of NODAL-mediated gene transcription in the left lateral plate mesoderm (LPM). Plays an essential role in differentiation of the adrenal cortex from the adrenogonadal primordium (AGP); stimulates WT1-mediated transcription activation thereby up-regulating the nuclear hormone receptor NR5A1 promoter activity. Associates with chromatin to the PITX2 P1 promoter region. In Saguinus labiatus (Red-chested mustached tamarin), this protein is Cbp/p300-interacting transactivator 2 (CITED2).